Consider the following 233-residue polypeptide: Low affinity immunoglobulin gamma Fc region receptor III-B (233 aa).

The N-terminal stretch at 1-16 (MWQLLLPTALLLLVSA) is a signal peptide. Ig-like C2-type domains follow at residues 40–96 (KDSV…LSTL) and 121–179 (EDPI…VGSK). Cys-47 and Cys-89 are oxidised to a cystine. Residues Asn-56, Asn-63, Asn-82, and Asn-92 are each glycosylated (N-linked (GlcNAc...) asparagine). An intrachain disulfide couples Cys-128 to Cys-172. Asn-180 and Asn-187 each carry an N-linked (GlcNAc...) asparagine glycan. Residue Ser-200 is the site of GPI-anchor amidated serine attachment. A propeptide spans 201–233 (SFSPPGYQVSFCLVMVLLFAVDTGLYFSVKTNI) (removed in mature form).

As to quaternary structure, monomer. Interacts with INPP5D/SHIP1. In terms of processing, glycosylated. Glycosylation plays an inhibitory role in the interaction with IgG3. The soluble form is produced by a proteolytic cleavage. As to expression, expressed specifically by polymorphonuclear leukocytes (neutrophils). Also expressed by stimulated eosinophils.

It is found in the cell membrane. The protein localises to the secreted. Receptor for the Fc region of immunoglobulins gamma. Low affinity receptor. Binds complexed or aggregated IgG and also monomeric IgG. Contrary to III-A, is not capable to mediate antibody-dependent cytotoxicity and phagocytosis. May serve as a trap for immune complexes in the peripheral circulation which does not activate neutrophils. In Homo sapiens (Human), this protein is Low affinity immunoglobulin gamma Fc region receptor III-B (FCGR3B).